We begin with the raw amino-acid sequence, 395 residues long: Syncephapepsin (395 aa).

The first 19 residues, 1 to 19, serve as a signal peptide directing secretion; it reads MKFSLALLATVALATISQA. The propeptide at 20 to 71 is activation peptide; the sequence is APVEKQVAGKPFQLVKNPHYQANATRAIFRAEKKYARHTAIPEQGKTIVKSA. The region spanning 89-391 is the Peptidase A1 domain; the sequence is YYATVSVGTP…NQGVPEVQIA (303 aa). The active site involves Asp-107. Cysteines 120 and 123 form a disulfide. Asp-288 is an active-site residue. A disulfide bridge connects residues Cys-322 and Cys-355.

The protein belongs to the peptidase A1 family. As to quaternary structure, monomer.

Its function is as follows. Hydrolysis of proteins with a broad specificity. Residues recognized to be cleaved were primarily those of trypsin and chymotrypsin and Lys was the most susceptible. This Syncephalastrum racemosum (Filamentous fungus) protein is Syncephapepsin (SPSR).